The primary structure comprises 446 residues: StAR-related lipid transfer protein 3 (446 aa).

Over 1–52 the chain is Cytoplasmic; the sequence is MSKRPGDLACDLERSLPALASLGTSLSHSQSLSSHFIPPPLEKRRAISDVRR. Positions 47 to 218 constitute an MENTAL domain; the sequence is ISDVRRTFCL…YSPPESFAGS (172 aa). A helical transmembrane segment spans residues 53–73; sequence TFCLFVTFDLLFISLLWIIEL. At 74 to 95 the chain is on the extracellular side; that stretch reads NTNTGIRKNLEQEVIHYSFQSS. A helical membrane pass occupies residues 96 to 116; it reads FFDIFVLAFFRFSGLLLGYAV. Residues 117–121 lie on the Cytoplasmic side of the membrane; the sequence is LRLQH. Residues 122-142 traverse the membrane as a helical segment; the sequence is WWVIAVTTLVSSAFLIVKVIL. Residues 143 to 149 lie on the Extracellular side of the membrane; that stretch reads SELLSKG. Residues 150-170 traverse the membrane as a helical segment; it reads AFGYLLPIVSFVLAWLETWFL. Residues 171–446 are Cytoplasmic-facing; it reads DFKVLPQEAE…QRVGELGARA (276 aa). The FFAT motif lies at 207-213; that stretch reads QFYSPPE. Ser210, Ser218, and Ser222 each carry phosphoserine. Residues 231–444 enclose the START domain; sequence SFSAQEREYI…LRQRVGELGA (214 aa).

The protein belongs to the STARD3 family. In terms of assembly, homodimer. Interacts (via the MENTAL domain) with STARD3NL. Interacts (via phosphorylated FFAT motif) with VAPA (via MSP domain). Interacts (via phosphorylated FFAT motif) with VAPB (via MSP domain). Interacts (via phosphorylated FFAT motif) with MOSPD2 (via MSP domain); this interaction allows enrichment of MOSPD2 around endosomes. In terms of processing, phosphorylation at Ser-210 is necessary and sufficient for the direct interaction of the phosphorylated FFAT motif with the MSP domain of MOSPD2, VAPA and VAPB and allows the tethering of two membranes that participates in the formation of ER-endosome contacts. Phosphorylation of the FFAT motif leads to conformation changes. Additional phosphorylations around the core FFAT motif (QFYSPPE) are not essential but strengthen the interaction with MOSPD2, VAPA and VAPB. Phosphorylation at Ser-210 of FFAT motif drives membrane tethering between the endoplasmic reticulum and late endosomes via interaction with VAPA and VAPB that in turn allows the efficient transport of sterol mediated by the START domain.

It localises to the late endosome membrane. The catalysed reaction is cholesterol(in) = cholesterol(out). Functionally, sterol-binding protein that mediates cholesterol transport from the endoplasmic reticulum to endosomes. The sterol transport mechanism is triggered by phosphorylation of FFAT motif that leads to membrane tethering between the endoplasmic reticulum and late endosomes via interaction with VAPA and VAPB. Acts as a lipid transfer protein that redirects sterol to the endosome at the expense of the cell membrane and favors membrane formation inside endosomes. May also mediate cholesterol transport between other membranes, such as mitochondria membrane or cell membrane. However, such results need additional experimental evidences; probably mainly mediates cholesterol transport from the endoplasmic reticulum to endosomes. Does not activate transcriptional cholesterol sensing. Able to bind other lipids, such as lutein, a xanthophyll carotenoids that form the macular pigment of the retina. The polypeptide is StAR-related lipid transfer protein 3 (Mus musculus (Mouse)).